The following is a 215-amino-acid chain: Hibernation-associated plasma protein HP-25 (215 aa).

The signal sequence occupies residues 1–28; it reads MPAQRGGALSMGAAGFWILVLSITSALA. The segment at 29–96 is disordered; the sequence is DSNNQGNSEP…RPKSAFAVKL (68 aa). Composition is skewed to pro residues over residues 39–51 and 60–77; these read CGPPGPPGPPGIP and LGPPGPPGVPGIPGPQGP. The 42-residue stretch at 40–81 folds into the Collagen-like domain; the sequence is GPPGPPGPPGIPGFPGAPGALGPPGPPGVPGIPGPQGPPGDV. The C1q domain occupies 85 to 215; sequence SSRPKSAFAV…VFFGYLLYGK (131 aa). N167 is a glycosylation site (N-linked (GlcNAc...) asparagine).

As to expression, plasma; synthesized in the liver.

The protein resides in the secreted. In terms of biological role, plasma proteins HP-20, HP-25, HP-27 and HP-55 form a 140 kDa complex via disulfide bonds in the plasma and are hibernation specific. This chain is Hibernation-associated plasma protein HP-25, found in Tamias sibiricus (Siberian chipmunk).